We begin with the raw amino-acid sequence, 153 residues long: UPF0540 protein At1g62220 (153 aa).

A signal peptide spans 1–21 (MNATKFVVLLVISVLCAIVTA). 2 disordered regions span residues 63-82 (SSATGFNNPKGPDANAYENG) and 122-153 (ARANGKVASASRVKGSSEKKKGKGKKGKGKKD). Over residues 122-132 (ARANGKVASAS) the composition is skewed to low complexity. Over residues 141-153 (KKGKGKKGKGKKD) the composition is skewed to basic residues.

It belongs to the UPF0540 family.

The protein is UPF0540 protein At1g62220 of Arabidopsis thaliana (Mouse-ear cress).